The primary structure comprises 810 residues: Zinc finger CCCH domain-containing protein 11A (810 aa).

C3H1-type zinc fingers lie at residues 2 to 29 (PNQGEDCYFFFYSTCTKGDSCPFRHCEA), 31 to 57 (IGNETVCTLWQEGRCFRQVCRFRHMEI), and 60 to 86 (KRSEIPCYWENQPTGCQKLNCAFHHNR). Phosphoserine is present on serine 108. Residues lysine 114 and lysine 124 each participate in a glycyl lysine isopeptide (Lys-Gly) (interchain with G-Cter in SUMO2) cross-link. Residue serine 132 is modified to Phosphoserine. Disordered stretches follow at residues 139–194 (MKVE…GLRV), 223–258 (KKMKEKSKKQGEGSSGVSSLLLHPEPVPGPEKENVR), 285–351 (GKRK…DKVN), and 367–432 (ERAS…TTCI). Residue lysine 140 forms a Glycyl lysine isopeptide (Lys-Gly) (interchain with G-Cter in SUMO2) linkage. Serine 149 and serine 171 each carry phosphoserine. The span at 160-175 (ADDDEDDDDQFSEEGD) shows a compositional bias: acidic residues. Serine 290 is subject to Phosphoserine. Composition is skewed to basic and acidic residues over residues 309–322 (KKVEAPETNIDKTP) and 367–390 (ERASQKRGELQTKLKTEGPSKTDD). The residue at position 321 (threonine 321) is a Phosphothreonine. Residues 362 to 423 (EEILLERASQ…KHRQQEAERQ (62 aa)) adopt a coiled-coil conformation. At serine 370 the chain carries Phosphoserine. Over residues 391–402 (STSGARSSSTIR) the composition is skewed to polar residues. A compositionally biased stretch (basic and acidic residues) spans 417–432 (QQEAERQKSKKDTTCI). Lysine 478 participates in a covalent cross-link: Glycyl lysine isopeptide (Lys-Gly) (interchain with G-Cter in SUMO2). The disordered stretch occupies residues 482–549 (ALRVQQSSES…KEASGETTGV (68 aa)). Over residues 486–498 (QQSSESSTSSPSQ) the composition is skewed to low complexity. Residue lysine 619 forms a Glycyl lysine isopeptide (Lys-Gly) (interchain with G-Cter in SUMO2) linkage. The tract at residues 715–768 (TVPEAENPRDSLVLPPTQSSSDSSPPEVSGPSSSQMSMKTRRLSSASTGKPPLS) is disordered. A compositionally biased stretch (low complexity) spans 729–748 (PPTQSSSDSSPPEVSGPSSS). Positions 749-762 (QMSMKTRRLSSAST) are enriched in polar residues.

Interacts with TREX complex components THOC2, DDX39 and POLDIP3; the interactions are ATP-dependent. Interacts with PABPN1; this interaction retains ZC3H11A in nuclear speckles. Interacts with KPNA3.

It localises to the nucleus. Its subcellular location is the nucleus speckle. Through its association with TREX complex components, may participate in the export and post-transcriptional coordination of selected mRNA transcripts, including those required to maintain the metabolic processes in embryonic cells. Binds RNA. Functionally, (Microbial infection) Plays a role in efficient growth of several nuclear-replicating viruses such as HIV-1, influenza virus or herpes simplex virus 1/HHV-1. Required for efficient viral mRNA export. May be required for proper polyadenylation of adenovirus type 5/HAdV-5 capsid mRNA. The protein is Zinc finger CCCH domain-containing protein 11A (ZC3H11A) of Homo sapiens (Human).